A 61-amino-acid chain; its full sequence is MKYTKFEKARIIGARALQIAMGAPVIIDVPKNIIDPVDIAMLEFENNVIPITIKKASKILN.

This sequence belongs to the archaeal Rpo6/eukaryotic RPB6 RNA polymerase subunit family. In terms of assembly, part of the RNA polymerase complex.

Its subcellular location is the cytoplasm. The enzyme catalyses RNA(n) + a ribonucleoside 5'-triphosphate = RNA(n+1) + diphosphate. Its function is as follows. DNA-dependent RNA polymerase (RNAP) catalyzes the transcription of DNA into RNA using the four ribonucleoside triphosphates as substrates. The sequence is that of DNA-directed RNA polymerase subunit Rpo6 from Thermoplasma acidophilum (strain ATCC 25905 / DSM 1728 / JCM 9062 / NBRC 15155 / AMRC-C165).